A 401-amino-acid chain; its full sequence is Bifunctional D-cysteine desulfhydrase/1-aminocyclopropane-1-carboxylate deaminase, mitochondrial (401 aa).

Residues 1 to 37 (MRGRSLTLSRVKLELARRSMSATSVPSMADFLTKKPY) constitute a mitochondrion transit peptide. Arg-2 is modified (N-acetylserine). Position 93 is an N6-(pyridoxal phosphate)lysine (Lys-93). Ser-120 serves as the catalytic Nucleophile.

The protein belongs to the ACC deaminase/D-cysteine desulfhydrase family. It depends on pyridoxal 5'-phosphate as a cofactor. Highly expressed in stems and cauline leaves, and at lower levels in roots, rosette leaves and flowers.

The protein localises to the mitochondrion. It carries out the reaction D-cysteine + H2O = hydrogen sulfide + pyruvate + NH4(+) + H(+). The catalysed reaction is 1-aminocyclopropane-1-carboxylate + H2O = 2-oxobutanoate + NH4(+). Its function is as follows. Catalyzes the production of hydrogen sulfide (H2S) from cysteine. Is mainly responsible for the degradation of cysteine to generate H2S, a regulator of stomatal movement and closure. Has high affinity for D-cysteine. Possesses 1-aminocyclopropane-1-carboxylic acid (ACC) deaminase activity. Acts as a regulator of ACC levels and causes changes in ethylene levels. This Arabidopsis thaliana (Mouse-ear cress) protein is Bifunctional D-cysteine desulfhydrase/1-aminocyclopropane-1-carboxylate deaminase, mitochondrial (DCD).